The sequence spans 357 residues: Mitogen-activated protein kinase kinase SIPKK (357 aa).

The region spanning 70-330 (FEAVKVIGKG…ANELMRHPFI (261 aa)) is the Protein kinase domain. Residues 76–84 (IGKGNGGIV) and Lys-99 each bind ATP. Asp-192 functions as the Proton acceptor in the catalytic mechanism.

The protein belongs to the protein kinase superfamily. STE Ser/Thr protein kinase family. MAP kinase kinase subfamily. As to quaternary structure, interacts with SIPK.

It carries out the reaction L-tyrosyl-[protein] + ATP = O-phospho-L-tyrosyl-[protein] + ADP + H(+). The catalysed reaction is L-seryl-[protein] + ATP = O-phospho-L-seryl-[protein] + ADP + H(+). The enzyme catalyses L-threonyl-[protein] + ATP = O-phospho-L-threonyl-[protein] + ADP + H(+). Phosphorylates myelin basic protein (MBP) in vitro. May be involved in disease resistance. In Nicotiana tabacum (Common tobacco), this protein is Mitogen-activated protein kinase kinase SIPKK.